Reading from the N-terminus, the 189-residue chain is Elongation factor P (189 aa).

Lys-34 carries the N6-(3,6-diaminohexanoyl)-5-hydroxylysine modification.

It belongs to the elongation factor P family. In terms of processing, may be beta-lysylated on the epsilon-amino group of Lys-34 by the combined action of EpmA and EpmB, and then hydroxylated on the C5 position of the same residue by EpmC (if this protein is present). Lysylation is critical for the stimulatory effect of EF-P on peptide-bond formation. The lysylation moiety may extend toward the peptidyltransferase center and stabilize the terminal 3-CCA end of the tRNA. Hydroxylation of the C5 position on Lys-34 may allow additional potential stabilizing hydrogen-bond interactions with the P-tRNA.

The protein localises to the cytoplasm. The protein operates within protein biosynthesis; polypeptide chain elongation. Involved in peptide bond synthesis. Alleviates ribosome stalling that occurs when 3 or more consecutive Pro residues or the sequence PPG is present in a protein, possibly by augmenting the peptidyl transferase activity of the ribosome. Modification of Lys-34 is required for alleviation. In Saccharophagus degradans (strain 2-40 / ATCC 43961 / DSM 17024), this protein is Elongation factor P.